The primary structure comprises 217 residues: Thiopurine S-methyltransferase (217 aa).

Residues Trp10, Leu45, Glu66, and Arg127 each coordinate S-adenosyl-L-methionine.

This sequence belongs to the class I-like SAM-binding methyltransferase superfamily. TPMT family.

It localises to the cytoplasm. The catalysed reaction is S-adenosyl-L-methionine + a thiopurine = S-adenosyl-L-homocysteine + a thiopurine S-methylether.. The polypeptide is Thiopurine S-methyltransferase (Acinetobacter baylyi (strain ATCC 33305 / BD413 / ADP1)).